Reading from the N-terminus, the 82-residue chain is Lysis inhibition accessory protein (82 aa).

It belongs to the T4likevirus lysis inhibition accessory protein rIII family. In terms of assembly, homooligomer. Interacts with holin (via N-terminus).

Probably binds to the cytoplasmic part of the holin during lysis inhibition and stabilizes the holin-antiholin complex thereby resulting in a robust block of the hole formation. This is Lysis inhibition accessory protein (rIII) from Escherichia coli (Bacteriophage T4).